Consider the following 688-residue polypeptide: Glycine--tRNA ligase beta subunit (688 aa).

The protein belongs to the class-II aminoacyl-tRNA synthetase family. Tetramer of two alpha and two beta subunits.

Its subcellular location is the cytoplasm. The enzyme catalyses tRNA(Gly) + glycine + ATP = glycyl-tRNA(Gly) + AMP + diphosphate. The sequence is that of Glycine--tRNA ligase beta subunit from Syntrophotalea carbinolica (strain DSM 2380 / NBRC 103641 / GraBd1) (Pelobacter carbinolicus).